Consider the following 157-residue polypeptide: Probable succinate transporter subunit YjjB (157 aa).

The next 4 helical transmembrane spans lie at Ile6–Met26, Val51–Gly71, Val87–Ile107, and Phe129–Trp149.

Belongs to the ThrE exporter (TC 2.A.79) family. As to quaternary structure, the transporter is composed of YjjB and YjjP.

It is found in the cell inner membrane. In terms of biological role, involved in succinate export with YjjP. Both proteins are required for export. The protein is Probable succinate transporter subunit YjjB of Proteus mirabilis (strain HI4320).